The primary structure comprises 96 residues: Small ribosomal subunit protein bS6c (96 aa).

Belongs to the bacterial ribosomal protein bS6 family.

It localises to the plastid. The protein resides in the chloroplast. Functionally, binds together with bS18 to 16S ribosomal RNA. The sequence is that of Small ribosomal subunit protein bS6c (rps6) from Trieres chinensis (Marine centric diatom).